A 182-amino-acid chain; its full sequence is MPLLNSIATPYSEALLQVAEARGESEQTANQVKELLQIWESSPELRNAMTSQVLEPEAKKAALMKLFSEQLTPAFTNLLKLLADRKRISALEAVLLRFLELYRDIHRIALAEVTSAIPLNEEQKELLRKKIQVVAGTNNVELKLLVDPSMIGGFIVSVGSQVIDASLAGQVRRLGLALAKLG.

This sequence belongs to the ATPase delta chain family. As to quaternary structure, F-type ATPases have 2 components, F(1) - the catalytic core - and F(0) - the membrane proton channel. F(1) has five subunits: alpha(3), beta(3), gamma(1), delta(1), epsilon(1). CF(0) has four main subunits: a(1), b(1), b'(1) and c(10-14). The alpha and beta chains form an alternating ring which encloses part of the gamma chain. F(1) is attached to F(0) by a central stalk formed by the gamma and epsilon chains, while a peripheral stalk is formed by the delta, b and b' chains.

The protein resides in the plastid. Its subcellular location is the organellar chromatophore thylakoid membrane. F(1)F(0) ATP synthase produces ATP from ADP in the presence of a proton or sodium gradient. F-type ATPases consist of two structural domains, F(1) containing the extramembraneous catalytic core and F(0) containing the membrane proton channel, linked together by a central stalk and a peripheral stalk. During catalysis, ATP synthesis in the catalytic domain of F(1) is coupled via a rotary mechanism of the central stalk subunits to proton translocation. Functionally, this protein is part of the stalk that links CF(0) to CF(1). It either transmits conformational changes from CF(0) to CF(1) or is implicated in proton conduction. This is ATP synthase subunit delta, organellar chromatophore from Paulinella chromatophora.